We begin with the raw amino-acid sequence, 248 residues long: Type III pantothenate kinase (248 aa).

8-15 contributes to the ATP binding site; the sequence is DAGNTRTK. Substrate contacts are provided by residues Tyr87 and 94-97; that span reads GVDR. The active-site Proton acceptor is Asp96. Residue Thr119 coordinates ATP. A substrate-binding site is contributed by Thr173.

It belongs to the type III pantothenate kinase family. In terms of assembly, homodimer. Requires NH4(+) as cofactor. The cofactor is K(+).

Its subcellular location is the cytoplasm. The catalysed reaction is (R)-pantothenate + ATP = (R)-4'-phosphopantothenate + ADP + H(+). Its pathway is cofactor biosynthesis; coenzyme A biosynthesis; CoA from (R)-pantothenate: step 1/5. Catalyzes the phosphorylation of pantothenate (Pan), the first step in CoA biosynthesis. In Methylobacillus flagellatus (strain ATCC 51484 / DSM 6875 / VKM B-1610 / KT), this protein is Type III pantothenate kinase.